We begin with the raw amino-acid sequence, 549 residues long: Cytoplasmic trehalase (549 aa).

Substrate contacts are provided by residues Arg168, 175 to 176 (WD), Asn212, 221 to 223 (RSQ), 292 to 294 (RDE), and Gly324. Catalysis depends on proton donor/acceptor residues Asp326 and Glu509. A substrate-binding site is contributed by Glu525.

The protein belongs to the glycosyl hydrolase 37 family. As to quaternary structure, monomer.

It localises to the cytoplasm. It catalyses the reaction alpha,alpha-trehalose + H2O = alpha-D-glucose + beta-D-glucose. It functions in the pathway glycan degradation; trehalose degradation; D-glucose from alpha,alpha-trehalose: step 1/1. Its function is as follows. Hydrolyzes trehalose to glucose. Could be involved, in cells returning to low osmolarity conditions, in the utilization of the accumulated cytoplasmic trehalose, which was synthesized in response to high osmolarity. The sequence is that of Cytoplasmic trehalase from Escherichia coli O81 (strain ED1a).